The sequence spans 75 residues: MAPEVLPKPRMRGLLARRLRNHMAVAFVLSLGVAALYKFRVADQRKKAYADFYRNYDVMKDFEEMRKAGIFQSVK.

At 1 to 13 (MAPEVLPKPRMRG) the chain is on the mitochondrial matrix side. A helical transmembrane segment spans residues 14-54 (LLARRLRNHMAVAFVLSLGVAALYKFRVADQRKKAYADFYR). Topologically, residues 55–75 (NYDVMKDFEEMRKAGIFQSVK) are mitochondrial intermembrane.

The protein belongs to the cytochrome c oxidase subunit 6c family. In terms of assembly, component of the cytochrome c oxidase (complex IV, CIV), a multisubunit enzyme composed of 14 subunits. The complex is composed of a catalytic core of 3 subunits MT-CO1, MT-CO2 and MT-CO3, encoded in the mitochondrial DNA, and 11 supernumerary subunits COX4I1 (or COX4I2), COX5A, COX5B, COX6A1 (or COX6A2), COX6B1 (or COX6B2), COX6C, COX7A2 (or COX7A1), COX7B, COX7C, COX8A and NDUFA4, which are encoded in the nuclear genome. The complex exists as a monomer or a dimer and forms supercomplexes (SCs) in the inner mitochondrial membrane with NADH-ubiquinone oxidoreductase (complex I, CI) and ubiquinol-cytochrome c oxidoreductase (cytochrome b-c1 complex, complex III, CIII), resulting in different assemblies (supercomplex SCI(1)III(2)IV(1) and megacomplex MCI(2)III(2)IV(2)).

Its subcellular location is the mitochondrion inner membrane. It participates in energy metabolism; oxidative phosphorylation. Its function is as follows. Component of the cytochrome c oxidase, the last enzyme in the mitochondrial electron transport chain which drives oxidative phosphorylation. The respiratory chain contains 3 multisubunit complexes succinate dehydrogenase (complex II, CII), ubiquinol-cytochrome c oxidoreductase (cytochrome b-c1 complex, complex III, CIII) and cytochrome c oxidase (complex IV, CIV), that cooperate to transfer electrons derived from NADH and succinate to molecular oxygen, creating an electrochemical gradient over the inner membrane that drives transmembrane transport and the ATP synthase. Cytochrome c oxidase is the component of the respiratory chain that catalyzes the reduction of oxygen to water. Electrons originating from reduced cytochrome c in the intermembrane space (IMS) are transferred via the dinuclear copper A center (CU(A)) of subunit 2 and heme A of subunit 1 to the active site in subunit 1, a binuclear center (BNC) formed by heme A3 and copper B (CU(B)). The BNC reduces molecular oxygen to 2 water molecules using 4 electrons from cytochrome c in the IMS and 4 protons from the mitochondrial matrix. The sequence is that of Cytochrome c oxidase subunit 6C (COX6C) from Homo sapiens (Human).